The following is a 196-amino-acid chain: Guanylate kinase (196 aa).

The 182-residue stretch at 8–189 folds into the Guanylate kinase-like domain; it reads GKIIIISGPS…AADKLRHILY (182 aa). 15–22 provides a ligand contact to ATP; that stretch reads GPSGVGKK.

This sequence belongs to the guanylate kinase family.

Its subcellular location is the cytoplasm. It catalyses the reaction GMP + ATP = GDP + ADP. Essential for recycling GMP and indirectly, cGMP. This is Guanylate kinase from Malacoplasma penetrans (strain HF-2) (Mycoplasma penetrans).